The following is a 202-amino-acid chain: LexA repressor (202 aa).

The H-T-H motif DNA-binding region spans 28–48 (RAEIAQQLGFRSPNAAEEHLK). Active-site for autocatalytic cleavage activity residues include serine 119 and lysine 156.

This sequence belongs to the peptidase S24 family. As to quaternary structure, homodimer.

The enzyme catalyses Hydrolysis of Ala-|-Gly bond in repressor LexA.. Represses a number of genes involved in the response to DNA damage (SOS response), including recA and lexA. In the presence of single-stranded DNA, RecA interacts with LexA causing an autocatalytic cleavage which disrupts the DNA-binding part of LexA, leading to derepression of the SOS regulon and eventually DNA repair. This Pectobacterium atrosepticum (strain SCRI 1043 / ATCC BAA-672) (Erwinia carotovora subsp. atroseptica) protein is LexA repressor.